Here is a 254-residue protein sequence, read N- to C-terminus: D-aminoacyl-tRNA deacylase (254 aa).

The segment at 61-83 (KPTLTVHTPGNLTEDNSHGGNPE) is disordered. Polar residues predominate over residues 65–74 (TVHTPGNLTE).

This sequence belongs to the DtdA deacylase family. In terms of assembly, monomer. Zn(2+) is required as a cofactor.

It catalyses the reaction a D-aminoacyl-tRNA + H2O = a tRNA + a D-alpha-amino acid + H(+). The enzyme catalyses glycyl-tRNA(Ala) + H2O = tRNA(Ala) + glycine + H(+). In terms of biological role, D-aminoacyl-tRNA deacylase with broad substrate specificity. By recycling D-aminoacyl-tRNA to D-amino acids and free tRNA molecules, this enzyme counteracts the toxicity associated with the formation of D-aminoacyl-tRNA entities in vivo. The sequence is that of D-aminoacyl-tRNA deacylase from Methanococcus maripaludis (strain C7 / ATCC BAA-1331).